The chain runs to 388 residues: Meiotic driver wtf13 (388 aa).

Positions 1–29 are enriched in basic and acidic residues; sequence MKNKDYPLRSSMDELSTKNDNEIDLEKGP. Residues 1-39 are disordered; sequence MKNKDYPLRSSMDELSTKNDNEIDLEKGPLPEYNSEDGS. Transmembrane regions (helical) follow at residues 89–109, 119–139, 152–172, 182–202, 207–227, 243–263, 267–287, 297–317, and 331–351; these read LLISVLAVIVVFFTAWVCVNP, AFSVTIGITCPIVFIAIFCFF, VTVIFLAQCVKVTAISLAQCV, CVKVTAVFLAKCVKVIAVGLY, DLVVTIWLAWVVICFILFGCV, CSISAALFFILLLVCIPIWTL, LFGLFQVLGVQSCVVIVTKGL, ATGYEIEASSLFVIGNFLFFY, and FIGNGIASFLGGLGNAFGGIG.

Belongs to the WTF family. In terms of assembly, homomer. Forms protein aggregates. The two isoforms can interact with each other and with themselves. High sequence similarity is required for their interaction.

It localises to the spore membrane. The protein resides in the vacuole membrane. Its subcellular location is the ascus epiplasm. It is found in the cytoplasm. The protein localises to the endoplasmic reticulum membrane. In terms of biological role, promotes unequal transmission of alleles from the parental zygote to progeny spores by acting as poison/antidote system where the poison and antidote proteins are produced from the same locus; the poison component is trans-acting and targets all spores within an ascus whereas the antidote component is spore-specific, leading to poisoning of all progeny that do not inherit the allele. Its function is as follows. Localizes isoform 2 to the vacuole thereby facilitating its degradation. In addition to suppressing isoform 2, also suppresses S.pombe strain FY29033 wtf18 isoform 2. Functionally, forms toxic aggregates that disrupt spore maturation. The chain is Meiotic driver wtf13 from Schizosaccharomyces pombe (strain 972 / ATCC 24843) (Fission yeast).